Consider the following 320-residue polypeptide: Cytochrome f (320 aa).

Positions 1 to 35 are cleaved as a signal peptide; that stretch reads MQNRNTFLGVKEQITRSIFVSIMIYVITRASISNA. Heme is bound by residues Y36, C56, C59, and H60. A helical membrane pass occupies residues 286 to 306; that stretch reads IQGLLFFLASVILAQIFLVLK.

It belongs to the cytochrome f family. The 4 large subunits of the cytochrome b6-f complex are cytochrome b6, subunit IV (17 kDa polypeptide, petD), cytochrome f and the Rieske protein, while the 4 small subunits are PetG, PetL, PetM and PetN. The complex functions as a dimer. It depends on heme as a cofactor.

Its subcellular location is the plastid. The protein localises to the chloroplast thylakoid membrane. In terms of biological role, component of the cytochrome b6-f complex, which mediates electron transfer between photosystem II (PSII) and photosystem I (PSI), cyclic electron flow around PSI, and state transitions. The sequence is that of Cytochrome f from Dioscorea elephantipes (Elephant's foot yam).